A 609-amino-acid chain; its full sequence is DNA-directed RNA polymerase subunit beta' (609 aa).

Cys67, Cys69, Cys82, and Cys85 together coordinate Zn(2+). 3 residues coordinate Mg(2+): Asp460, Asp462, and Asp464.

This sequence belongs to the RNA polymerase beta' chain family. RpoC1 subfamily. In plastids the minimal PEP RNA polymerase catalytic core is composed of four subunits: alpha, beta, beta', and beta''. When a (nuclear-encoded) sigma factor is associated with the core the holoenzyme is formed, which can initiate transcription. Requires Mg(2+) as cofactor. Zn(2+) is required as a cofactor.

It localises to the plastid. It is found in the chloroplast. It catalyses the reaction RNA(n) + a ribonucleoside 5'-triphosphate = RNA(n+1) + diphosphate. DNA-dependent RNA polymerase catalyzes the transcription of DNA into RNA using the four ribonucleoside triphosphates as substrates. In Emiliania huxleyi (Coccolithophore), this protein is DNA-directed RNA polymerase subunit beta'.